A 251-amino-acid chain; its full sequence is Small ribosomal subunit protein uS3 (251 aa).

The KH type-2 domain maps to 39-111 (IRELINNFSK…DVDLNILEVK (73 aa)).

This sequence belongs to the universal ribosomal protein uS3 family. As to quaternary structure, part of the 30S ribosomal subunit. Forms a tight complex with proteins S10 and S14.

In terms of biological role, binds the lower part of the 30S subunit head. Binds mRNA in the 70S ribosome, positioning it for translation. This is Small ribosomal subunit protein uS3 from Phytoplasma sp. (strain STRAWB1).